The primary structure comprises 342 residues: S-adenosylmethionine:tRNA ribosyltransferase-isomerase (342 aa).

The protein belongs to the QueA family. As to quaternary structure, monomer.

The protein resides in the cytoplasm. The catalysed reaction is 7-aminomethyl-7-carbaguanosine(34) in tRNA + S-adenosyl-L-methionine = epoxyqueuosine(34) in tRNA + adenine + L-methionine + 2 H(+). It functions in the pathway tRNA modification; tRNA-queuosine biosynthesis. Its function is as follows. Transfers and isomerizes the ribose moiety from AdoMet to the 7-aminomethyl group of 7-deazaguanine (preQ1-tRNA) to give epoxyqueuosine (oQ-tRNA). The chain is S-adenosylmethionine:tRNA ribosyltransferase-isomerase from Shouchella clausii (strain KSM-K16) (Alkalihalobacillus clausii).